A 329-amino-acid chain; its full sequence is Ig gamma-2C chain C region (329 aa).

The CH1 stretch occupies residues 1–97; the sequence is ARTTAPSVYP…ATKSNLIKRI (97 aa). A disulfide bond links Cys-27 and Cys-82. The interval 98–113 is hinge; that stretch reads EPRRPKPRPPTDICSC. The interval 114–222 is CH2; it reads DDNLGRPSVF…PIEKTISKPR (109 aa). 2 disulfides stabilise this stretch: Cys-143/Cys-203 and Cys-249/Cys-307. A CH3 region spans residues 223-329; that stretch reads GKARTPQVYT…QKNLSRSPGK (107 aa).

The chain is Ig gamma-2C chain C region from Rattus norvegicus (Rat).